A 130-amino-acid chain; its full sequence is Small ribosomal subunit protein uS11 (130 aa).

This sequence belongs to the universal ribosomal protein uS11 family. In terms of assembly, part of the 30S ribosomal subunit. Interacts with proteins S7 and S18. Binds to IF-3.

Functionally, located on the platform of the 30S subunit, it bridges several disparate RNA helices of the 16S rRNA. Forms part of the Shine-Dalgarno cleft in the 70S ribosome. In Buchnera aphidicola subsp. Cinara cedri (strain Cc), this protein is Small ribosomal subunit protein uS11.